Reading from the N-terminus, the 339-residue chain is ATPase GET3 (339 aa).

34 to 41 (KGGVGKTT) serves as a coordination point for ATP. Aspartate 63 is a catalytic residue. Positions 244 and 271 each coordinate ATP. Zn(2+) is bound by residues cysteine 282 and cysteine 285.

The protein belongs to the arsA ATPase family. Homodimer.

It is found in the cytoplasm. The protein localises to the endoplasmic reticulum. Its function is as follows. ATPase required for the post-translational delivery of tail-anchored (TA) proteins to the endoplasmic reticulum. Recognizes and selectively binds the transmembrane domain of TA proteins in the cytosol. This complex then targets to the endoplasmic reticulum by membrane-bound receptors, where the tail-anchored protein is released for insertion. This process is regulated by ATP binding and hydrolysis. ATP binding drives the homodimer towards the closed dimer state, facilitating recognition of newly synthesized TA membrane proteins. ATP hydrolysis is required for insertion. Subsequently, the homodimer reverts towards the open dimer state, lowering its affinity for the membrane-bound receptor, and returning it to the cytosol to initiate a new round of targeting. In Podospora anserina (strain S / ATCC MYA-4624 / DSM 980 / FGSC 10383) (Pleurage anserina), this protein is ATPase GET3.